A 116-amino-acid polypeptide reads, in one-letter code: Diuretic hormone class 2 (116 aa).

Residues 1-25 (MTNRCACFALAFLLFCLLAISSIEA) form the signal peptide. Residues 26–75 (APMPSQSNGGYGGAGYNELEEVPDDLLMELMTRFGRTIIRARNDLENSKR) constitute a propeptide that is removed on maturation. Pro-106 is subject to Proline amide. A propeptide spanning residues 112–116 (SETDV) is cleaved from the precursor.

It localises to the secreted. Its function is as follows. Regulation of fluid secretion. Stimulates Malpighian tubules fluid secretion by activating the apical membrane V-ATPase via cyclic AMP of principal cells in the main secretory segment. The chain is Diuretic hormone class 2 (Dh31) from Drosophila melanogaster (Fruit fly).